The chain runs to 161 residues: UPF0178 protein BSUIS_A1819 (161 aa).

It belongs to the UPF0178 family.

This is UPF0178 protein BSUIS_A1819 from Brucella suis (strain ATCC 23445 / NCTC 10510).